The primary structure comprises 332 residues: CRISPR-associated endonuclease Cas1 3 (332 aa).

Residues Glu-159, His-224, and Glu-239 each contribute to the Mn(2+) site.

The protein belongs to the CRISPR-associated endonuclease Cas1 family. Homodimer, forms a heterotetramer with a Cas2 homodimer. The cofactor is Mg(2+). It depends on Mn(2+) as a cofactor.

In terms of biological role, CRISPR (clustered regularly interspaced short palindromic repeat), is an adaptive immune system that provides protection against mobile genetic elements (viruses, transposable elements and conjugative plasmids). CRISPR clusters contain spacers, sequences complementary to antecedent mobile elements, and target invading nucleic acids. CRISPR clusters are transcribed and processed into CRISPR RNA (crRNA). Acts as a dsDNA endonuclease. Involved in the integration of spacer DNA into the CRISPR cassette. This is CRISPR-associated endonuclease Cas1 3 from Thermus thermophilus (strain ATCC 27634 / DSM 579 / HB8).